The primary structure comprises 209 residues: Thymidylate kinase (209 aa).

Residue 13–20 (GLEGAGKS) coordinates ATP.

Belongs to the thymidylate kinase family.

It catalyses the reaction dTMP + ATP = dTDP + ADP. Its function is as follows. Phosphorylation of dTMP to form dTDP in both de novo and salvage pathways of dTTP synthesis. This Shewanella sp. (strain MR-4) protein is Thymidylate kinase.